A 346-amino-acid polypeptide reads, in one-letter code: N-acetyl-gamma-glutamyl-phosphate reductase (346 aa).

Residue Cys149 is part of the active site.

It belongs to the NAGSA dehydrogenase family. Type 1 subfamily.

The protein localises to the cytoplasm. The catalysed reaction is N-acetyl-L-glutamate 5-semialdehyde + phosphate + NADP(+) = N-acetyl-L-glutamyl 5-phosphate + NADPH + H(+). It participates in amino-acid biosynthesis; L-arginine biosynthesis; N(2)-acetyl-L-ornithine from L-glutamate: step 3/4. In terms of biological role, catalyzes the NADPH-dependent reduction of N-acetyl-5-glutamyl phosphate to yield N-acetyl-L-glutamate 5-semialdehyde. The protein is N-acetyl-gamma-glutamyl-phosphate reductase of Pelobacter propionicus (strain DSM 2379 / NBRC 103807 / OttBd1).